Reading from the N-terminus, the 590-residue chain is Putative sodium/calcium exchanger 6 (590 aa).

The signal sequence occupies residues 1-19; sequence MRIHFFAFLIILSLVGCDG. 11 helical membrane-spanning segments follow: residues 97–117, 139–159, 173–193, 208–228, 230–250, 368–388, 397–417, 440–460, 499–519, 535–555, and 568–588; these read IILI…VSSA, VAGV…GAIA, LGEL…VTIF, IAFY…YDHV, IWMP…VILS, PITL…IQVC, PGLW…VLFF, IAWI…LGVV, AAAI…PFTI, YRLL…AMFA, and LVFI…DILV.

It belongs to the Ca(2+):cation antiporter (CaCA) (TC 2.A.19) family.

It is found in the membrane. The chain is Putative sodium/calcium exchanger 6 (ncx-6) from Caenorhabditis elegans.